The following is a 340-amino-acid chain: Methane monooxygenase component C (340 aa).

A 2Fe-2S ferredoxin-type domain is found at 1-92 (MYQIVIETED…DLHLLVPYTY (92 aa)). Residues Cys37, Cys41, Cys44, and Cys76 each coordinate [2Fe-2S] cluster. In terms of domain architecture, FAD-binding FR-type spans 101–205 (QTNWLAEILA…RGPAGSFFLH (105 aa)). 215–229 (VAGGTGLSPVLSMIR) is an FAD binding site.

In terms of assembly, the soluble methane monooxygenase (sMMO) consists of four components A/MMOH (composed of alpha/MmoX, beta/MmoY and gamma/MmoZ), B/MMOB (MmoB), C/MMOR (MmoC) and D/MMOD (MmoD). [2Fe-2S] cluster serves as cofactor.

It catalyses the reaction methane + NADH + O2 + H(+) = methanol + NAD(+) + H2O. The enzyme catalyses methane + NADPH + O2 + H(+) = methanol + NADP(+) + H2O. In terms of biological role, responsible for the initial oxygenation of methane to methanol in methanotrophs. It also catalyzes the monohydroxylation of a variety of unactivated alkenes, alicyclic, aromatic and heterocyclic compounds. The component C is the iron-sulfur flavoprotein of sMMO. In Methylosinus trichosporium, this protein is Methane monooxygenase component C (mmoC).